The chain runs to 372 residues: GDP-mannose 4,6-dehydratase (372 aa).

NADP(+) contacts are provided by residues 9–14 (GVTGQD), 64–65 (DL), 86–90 (LGAQS), and Tyr-101. Residue Thr-133 is part of the active site. Active-site nucleophile residues include Glu-135 and Tyr-157. Residues Lys-161, His-187, and Arg-192 each contribute to the NADP(+) site.

The protein belongs to the NAD(P)-dependent epimerase/dehydratase family. GDP-mannose 4,6-dehydratase subfamily. NADP(+) serves as cofactor.

It catalyses the reaction GDP-alpha-D-mannose = GDP-4-dehydro-alpha-D-rhamnose + H2O. It participates in nucleotide-sugar biosynthesis; GDP-L-fucose biosynthesis via de novo pathway; GDP-L-fucose from GDP-alpha-D-mannose: step 1/2. Catalyzes the conversion of GDP-D-mannose to GDP-4-dehydro-6-deoxy-D-mannose. The polypeptide is GDP-mannose 4,6-dehydratase (Vibrio cholerae).